We begin with the raw amino-acid sequence, 298 residues long: Protein OS-9 homolog (298 aa).

An N-terminal signal peptide occupies residues 1–25; the sequence is MGLAGGARVVLFVVAAAAAAALTAA. The N-linked (GlcNAc...) asparagine glycan is linked to asparagine 95. Residues 121 to 246 form the MRH domain; it reads DQCFYRHEGW…TVQSPMLCKN (126 aa). Cysteine 123 and cysteine 136 are disulfide-bonded. The a mannooligosaccharide derivative site is built by tryptophan 130, tryptophan 131, and glutamine 143. N-linked (GlcNAc...) asparagine glycosylation is found at asparagine 171 and asparagine 197. 2 cysteine pairs are disulfide-bonded: cysteine 201/cysteine 232 and cysteine 216/cysteine 244. The a mannooligosaccharide derivative site is built by aspartate 202, arginine 208, glutamate 228, and tyrosine 234.

Belongs to the OS-9 family. In terms of assembly, interacts with HRD3.

The protein resides in the endoplasmic reticulum. Its function is as follows. Lectin which functions in endoplasmic reticulum (ER) quality control and ER-associated degradation (ERAD). May bind terminally misfolded non-glycosylated proteins as well as improperly folded glycoproteins, retain them in the ER, and possibly transfer them to the ubiquitination machinery and promote their degradation. The sequence is that of Protein OS-9 homolog from Oryza sativa subsp. japonica (Rice).